The primary structure comprises 215 residues: Probable phosphoglycerate mutase GpmB (215 aa).

Substrate is bound by residues 8-15 (RHGETVWN), 21-22 (QG), arginine 58, 82-85 (ELNM), and 151-152 (GM). Histidine 9 (tele-phosphohistidine intermediate) is an active-site residue. Residue glutamate 82 is the Proton donor/acceptor of the active site.

It belongs to the phosphoglycerate mutase family. GpmB subfamily.

It carries out the reaction (2R)-2-phosphoglycerate = (2R)-3-phosphoglycerate. It functions in the pathway carbohydrate degradation; glycolysis; pyruvate from D-glyceraldehyde 3-phosphate: step 3/5. The polypeptide is Probable phosphoglycerate mutase GpmB (Yersinia enterocolitica serotype O:8 / biotype 1B (strain NCTC 13174 / 8081)).